The chain runs to 85 residues: Large ribosomal subunit protein bL27 (85 aa).

It belongs to the bacterial ribosomal protein bL27 family.

The sequence is that of Large ribosomal subunit protein bL27 from Xylella fastidiosa (strain 9a5c).